The following is a 166-amino-acid chain: SsrA-binding protein (166 aa).

Belongs to the SmpB family.

It is found in the cytoplasm. Required for rescue of stalled ribosomes mediated by trans-translation. Binds to transfer-messenger RNA (tmRNA), required for stable association of tmRNA with ribosomes. tmRNA and SmpB together mimic tRNA shape, replacing the anticodon stem-loop with SmpB. tmRNA is encoded by the ssrA gene; the 2 termini fold to resemble tRNA(Ala) and it encodes a 'tag peptide', a short internal open reading frame. During trans-translation Ala-aminoacylated tmRNA acts like a tRNA, entering the A-site of stalled ribosomes, displacing the stalled mRNA. The ribosome then switches to translate the ORF on the tmRNA; the nascent peptide is terminated with the 'tag peptide' encoded by the tmRNA and targeted for degradation. The ribosome is freed to recommence translation, which seems to be the essential function of trans-translation. The sequence is that of SsrA-binding protein from Parasynechococcus marenigrum (strain WH8102).